Here is a 549-residue protein sequence, read N- to C-terminus: Vacuolar fusion protein MON1 homolog A (549 aa).

Disordered stretches follow at residues 1-90 (MAAD…EQIS) and 109-137 (EEMR…GKEE). Positions 110-119 (EMRQSQEGKL) are enriched in basic and acidic residues.

This sequence belongs to the MON1/SAND family.

Its function is as follows. Plays an important role in membrane trafficking through the secretory apparatus. Not involved in endocytic trafficking to lysosomes. The protein is Vacuolar fusion protein MON1 homolog A (MON1A) of Gallus gallus (Chicken).